The sequence spans 419 residues: Protein FAM181B (419 aa).

Residues Leu-107–Ala-157 form a disordered region.

It belongs to the FAM181 family.

The sequence is that of Protein FAM181B (FAM181B) from Bos taurus (Bovine).